The sequence spans 318 residues: Ribosomal RNA small subunit methyltransferase H (318 aa).

S-adenosyl-L-methionine contacts are provided by residues 37–39 (GGH), aspartate 56, tyrosine 83, aspartate 104, and glutamine 111. The tract at residues 293–318 (EEEIAENRRAAPARLRGAQRIREDAE) is disordered.

It belongs to the methyltransferase superfamily. RsmH family.

The protein localises to the cytoplasm. It carries out the reaction cytidine(1402) in 16S rRNA + S-adenosyl-L-methionine = N(4)-methylcytidine(1402) in 16S rRNA + S-adenosyl-L-homocysteine + H(+). Its function is as follows. Specifically methylates the N4 position of cytidine in position 1402 (C1402) of 16S rRNA. This Streptomyces avermitilis (strain ATCC 31267 / DSM 46492 / JCM 5070 / NBRC 14893 / NCIMB 12804 / NRRL 8165 / MA-4680) protein is Ribosomal RNA small subunit methyltransferase H.